Consider the following 361-residue polypeptide: MENIHIQTKSKEYDVHVGREALSHLTTLIQKMNPAVSNIMIISDEAVASLHLQTAVDALQVEQKVFSFVVPSGEKEKSFENFYEAHTSALENKLDRNSLIIALGGGMIGDLAGFVAASFMRGIRFVQVPTTLLAHDSAVGGKVAINHPLGKNMIGAFHQPEAVVYHTPFLHSLPEKEWRSGYAEVIKHALIGDVELYHWLKEEVQTLTDLRDEKLIHILTKAIPVKANIVSQDETEKGIRAHLNFGHTLGHALEKELGYGNITHGDGVAVGMLFAMFLSEQVYKVDLSYEEMKQWFLKYGYPKMPSDLNVERLVQLMKQDKKANAGTIHMVLMQEYGGVNVVSISDETVHIALEAFQKDMV.

Residues serine 72–lysine 77, threonine 130–threonine 131, lysine 142, and lysine 151 contribute to the NAD(+) site. Positions 184, 247, and 264 each coordinate Zn(2+).

The protein belongs to the sugar phosphate cyclases superfamily. Dehydroquinate synthase family. Requires Co(2+) as cofactor. Zn(2+) is required as a cofactor. NAD(+) serves as cofactor.

Its subcellular location is the cytoplasm. It catalyses the reaction 7-phospho-2-dehydro-3-deoxy-D-arabino-heptonate = 3-dehydroquinate + phosphate. It functions in the pathway metabolic intermediate biosynthesis; chorismate biosynthesis; chorismate from D-erythrose 4-phosphate and phosphoenolpyruvate: step 2/7. Catalyzes the conversion of 3-deoxy-D-arabino-heptulosonate 7-phosphate (DAHP) to dehydroquinate (DHQ). The polypeptide is 3-dehydroquinate synthase (Bacillus mycoides (strain KBAB4) (Bacillus weihenstephanensis)).